The chain runs to 63 residues: MKKRFSSYSLPPWVRQIRLVSAQVIIPITIFQGIRTIFFPTTFDVLLLAILIFLACALHLEWI.

A helical membrane pass occupies residues 37–57 (IFFPTTFDVLLLAILIFLACA).

The protein localises to the cell membrane. This is an uncharacterized protein from Bacillus subtilis (strain 168).